The primary structure comprises 597 residues: NADH-quinone oxidoreductase subunit C/D (597 aa).

The tract at residues 1–187 (MIDENKKKNT…ESFFLDEQKE (187 aa)) is NADH dehydrogenase I subunit C. The interval 211-597 (DFMFLNLGPN…IDFVMSDVDR (387 aa)) is NADH dehydrogenase I subunit D.

It in the N-terminal section; belongs to the complex I 30 kDa subunit family. The protein in the C-terminal section; belongs to the complex I 49 kDa subunit family. As to quaternary structure, NDH-1 is composed of 13 different subunits. Subunits NuoB, CD, E, F, and G constitute the peripheral sector of the complex.

It is found in the cell inner membrane. It catalyses the reaction a quinone + NADH + 5 H(+)(in) = a quinol + NAD(+) + 4 H(+)(out). NDH-1 shuttles electrons from NADH, via FMN and iron-sulfur (Fe-S) centers, to quinones in the respiratory chain. The immediate electron acceptor for the enzyme in this species is believed to be ubiquinone. Couples the redox reaction to proton translocation (for every two electrons transferred, four hydrogen ions are translocated across the cytoplasmic membrane), and thus conserves the redox energy in a proton gradient. This Buchnera aphidicola subsp. Schizaphis graminum (strain Sg) protein is NADH-quinone oxidoreductase subunit C/D.